The chain runs to 331 residues: Ketol-acid reductoisomerase (NADP(+)) (331 aa).

In terms of domain architecture, KARI N-terminal Rossmann spans 1 to 181 (MKMYYDADAD…GGTRAGVIET (181 aa)). NADP(+)-binding positions include 24–27 (YGSQ), Arg-47, Ser-50, and 82–85 (DEKQ). His-107 is a catalytic residue. Gly-133 is a binding site for NADP(+). One can recognise a KARI C-terminal knotted domain in the interval 182–327 (TFREETETDL…KKLRAMMPWL (146 aa)). Residues Asp-190, Glu-194, Glu-226, and Glu-230 each contribute to the Mg(2+) site. A substrate-binding site is contributed by Ser-251.

The protein belongs to the ketol-acid reductoisomerase family. Mg(2+) is required as a cofactor.

The catalysed reaction is (2R)-2,3-dihydroxy-3-methylbutanoate + NADP(+) = (2S)-2-acetolactate + NADPH + H(+). The enzyme catalyses (2R,3R)-2,3-dihydroxy-3-methylpentanoate + NADP(+) = (S)-2-ethyl-2-hydroxy-3-oxobutanoate + NADPH + H(+). Its pathway is amino-acid biosynthesis; L-isoleucine biosynthesis; L-isoleucine from 2-oxobutanoate: step 2/4. It participates in amino-acid biosynthesis; L-valine biosynthesis; L-valine from pyruvate: step 2/4. Involved in the biosynthesis of branched-chain amino acids (BCAA). Catalyzes an alkyl-migration followed by a ketol-acid reduction of (S)-2-acetolactate (S2AL) to yield (R)-2,3-dihydroxy-isovalerate. In the isomerase reaction, S2AL is rearranged via a Mg-dependent methyl migration to produce 3-hydroxy-3-methyl-2-ketobutyrate (HMKB). In the reductase reaction, this 2-ketoacid undergoes a metal-dependent reduction by NADPH to yield (R)-2,3-dihydroxy-isovalerate. This Heliobacterium modesticaldum (strain ATCC 51547 / Ice1) protein is Ketol-acid reductoisomerase (NADP(+)).